The primary structure comprises 134 residues: UPF0412 protein YaaI (134 aa).

The signal sequence occupies residues 1-23 (MRSVLTISVGLLFGLALSSVAHA).

The protein belongs to the UPF0412 family.

The sequence is that of UPF0412 protein YaaI from Salmonella typhimurium (strain LT2 / SGSC1412 / ATCC 700720).